A 151-amino-acid chain; its full sequence is MLYDVQKIKEILPHRFPFLLVDRVTALTSEESIEAYKNITINEEVFQGHFPIKPVYPGVLVIEGMAQAGGVLAFVSMFGEEASNHDEKIVYFMSIDKAKFRVPVTPGDKLVYRLNVLKHKGSIWILEGRAYVDDKLVAEAELKAMVADKEK.

Residue His-49 is part of the active site.

It belongs to the thioester dehydratase family. FabZ subfamily.

The protein localises to the cytoplasm. It carries out the reaction a (3R)-hydroxyacyl-[ACP] = a (2E)-enoyl-[ACP] + H2O. Involved in unsaturated fatty acids biosynthesis. Catalyzes the dehydration of short chain beta-hydroxyacyl-ACPs and long chain saturated and unsaturated beta-hydroxyacyl-ACPs. This chain is 3-hydroxyacyl-[acyl-carrier-protein] dehydratase FabZ, found in Wolinella succinogenes (strain ATCC 29543 / DSM 1740 / CCUG 13145 / JCM 31913 / LMG 7466 / NCTC 11488 / FDC 602W) (Vibrio succinogenes).